The primary structure comprises 184 residues: CASP-like protein 1U2 (184 aa).

Residues 1-16 (MSYGCQVSDDEPNGSK) are Cytoplasmic-facing. The helical transmembrane segment at 17-37 (AVSLLLRLSTLALALTSAVVM) threads the bilayer. At 38-62 (ATASECTVVQLNGVVATITYKDFPP) the chain is on the extracellular side. Residues 63–83 (FVYLVGFNIAAAMLEAAAIYL) traverse the membrane as a helical segment. The Cytoplasmic portion of the chain corresponds to 84–100 (RLSTGGGDDDDEGFKGK). A helical membrane pass occupies residues 101-121 (LPGILLVVIDVAVQALVYTAT). Topologically, residues 122 to 153 (GGAFAAVSAYGPQINACGAGAGRFCGQVHQSK) are extracellular. Residues 154-174 (LLSFAGSAAVGLAVVFRDVSL) form a helical membrane-spanning segment. Over 175–184 (PFSLWPTSSD) the chain is Cytoplasmic.

Belongs to the Casparian strip membrane proteins (CASP) family. In terms of assembly, homodimer and heterodimers.

It is found in the cell membrane. This Oryza sativa subsp. japonica (Rice) protein is CASP-like protein 1U2.